We begin with the raw amino-acid sequence, 680 residues long: MALDGIRMPDGCYADGTWELSVHVTDLNRDVTLRVTGEVHIGGVMLKLVEKLDVKKDWSDHALWWEKKRTWLLKTHWTLDKYGIQADAKLQFTPQHKLLRLQLPNMKYVKVKVNFSDRVFKAVSDICKTFNIRHPEELSLLKKPRDPTKKKKKKLDDQSEDEALELEGPLITPGSGSIYSSPGLYSKTMTPTYDAHDGSPLSPTSAWFGDSALSEGNPGILAVSQPITSPEILAKMFKPQALLDKAKINQGWLDSSRSLMEQDVKENEALLLRFKYYSFFDLNPKYDAIRINQLYEQAKWAILLEEIECTEEEMMMFAALQYHINKLSIMTSENHLNNSDKEVDEVDAALSDLEITLEGGKTSTILGDITSIPELADYIKVFKPKKLTLKGYKQYWCTFKDTSISCYKSKEESSGTPAHQMNLRGCEVTPDVNISGQKFNIKLLIPVAEGMNEIWLRCDNEKQYAHWMAACRLASKGKTMADSSYNLEVQNILSFLKMQHLNPDPQLIPEQITTDITPECLVSPRYLKKYKNKQITARILEAHQNVAQMSLIEAKMRFIQAWQSLPEFGITHFIARFQGGKKEELIGIAYNRLIRMDASTGDAIKTWRFSNMKQWNVNWEIKMVTVEFADEVRLSFICTEVDCKVVHEFIGGYIFLSTRAKDQNESLDEEMFYKLTSGWV.

The segment at 40–81 (HIGGVMLKLVEKLDVKKDWSDHALWWEKKRTWLLKTHWTLDK) is interaction with membranes containing phosphatidylinositol phosphate. Positions 141-165 (LKKPRDPTKKKKKKLDDQSEDEALE) are disordered. A phosphoserine mark is found at serine 159, serine 181, serine 339, and serine 351. Positions 189–661 (MTPTYDAHDG…GYIFLSTRAK (473 aa)) constitute an FERM domain. In terms of domain architecture, PH spans 380–476 (KVFKPKKLTL…WMAACRLASK (97 aa)). Lysine 383 lines the a 1,2-diacyl-sn-glycero-3-phospho-(1D-myo-inositol-3,4,5-trisphosphate) pocket. Serine 666 carries the phosphoserine modification.

It belongs to the kindlin family. As to quaternary structure, interacts with ILK. Interacts with FBLIM1. Interacts with ITGB1 and ITGB3. Interacts with active, unphosphorylated CTNNB1. Identified in a complex with CTNNB1 and TCF7L2/TCF4. Interacts with ITGB1; the interaction is inhibited in presence of ITGB1BP1. In terms of tissue distribution, ubiquitous. Found in numerous tumor tissues.

It is found in the cytoplasm. It localises to the cell cortex. The protein resides in the cytoskeleton. Its subcellular location is the stress fiber. The protein localises to the cell junction. It is found in the focal adhesion. It localises to the membrane. The protein resides in the cell projection. Its subcellular location is the lamellipodium membrane. The protein localises to the nucleus. It is found in the myofibril. It localises to the sarcomere. The protein resides in the i band. Its subcellular location is the cell surface. Its function is as follows. Scaffolding protein that enhances integrin activation mediated by TLN1 and/or TLN2, but activates integrins only weakly by itself. Binds to membranes enriched in phosphoinositides. Enhances integrin-mediated cell adhesion onto the extracellular matrix and cell spreading; this requires both its ability to interact with integrins and with phospholipid membranes. Required for the assembly of focal adhesions. Participates in the connection between extracellular matrix adhesion sites and the actin cytoskeleton and also in the orchestration of actin assembly and cell shape modulation. Recruits FBLIM1 to focal adhesions. Plays a role in the TGFB1 and integrin signaling pathways. Stabilizes active CTNNB1 and plays a role in the regulation of transcription mediated by CTNNB1 and TCF7L2/TCF4 and in Wnt signaling. This Homo sapiens (Human) protein is Fermitin family homolog 2 (FERMT2).